The following is a 333-amino-acid chain: Abequosyltransferase RfbV (333 aa).

The protein belongs to the glycosyltransferase 2 family.

It catalyses the reaction CDP-alpha-D-abequose + alpha-D-Man-(1-&gt;4)-alpha-L-Rha-(1-&gt;3)-alpha-D-Gal-di-trans,octa-cis-undecaprenyl diphosphate = alpha-D-Abe-(1-&gt;3)-alpha-D-Man-(1-&gt;4)-alpha-L-Rha-(1-&gt;3)-alpha-D-Gal-di-trans,octa-cis-undecaprenyl diphosphate + CDP + H(+). Its pathway is bacterial outer membrane biogenesis; LPS O-antigen biosynthesis. In terms of biological role, catalyzes the transfer of CDP-abequose on D-mannosyl-L-rhamnosyl-D-galactose-1-diphospholipid to yield D-abequosyl-D-mannosyl-rhamnosyl-D-galactose-1-diphospholipid. The sequence is that of Abequosyltransferase RfbV (rfbV) from Salmonella typhimurium (strain LT2 / SGSC1412 / ATCC 700720).